A 365-amino-acid chain; its full sequence is Anhydro-N-acetylmuramic acid kinase (365 aa).

12 to 19 (GTSMDGMD) serves as a coordination point for ATP.

The protein belongs to the anhydro-N-acetylmuramic acid kinase family.

The catalysed reaction is 1,6-anhydro-N-acetyl-beta-muramate + ATP + H2O = N-acetyl-D-muramate 6-phosphate + ADP + H(+). Its pathway is amino-sugar metabolism; 1,6-anhydro-N-acetylmuramate degradation. It functions in the pathway cell wall biogenesis; peptidoglycan recycling. Catalyzes the specific phosphorylation of 1,6-anhydro-N-acetylmuramic acid (anhMurNAc) with the simultaneous cleavage of the 1,6-anhydro ring, generating MurNAc-6-P. Is required for the utilization of anhMurNAc either imported from the medium or derived from its own cell wall murein, and thus plays a role in cell wall recycling. In Pseudomonas paraeruginosa (strain DSM 24068 / PA7) (Pseudomonas aeruginosa (strain PA7)), this protein is Anhydro-N-acetylmuramic acid kinase.